The chain runs to 565 residues: Urocanate hydratase (565 aa).

NAD(+) contacts are provided by residues 58–59 (GG), Gln136, 182–184 (GMG), Glu202, Arg207, 245–246 (NA), 266–270 (QTSAH), 276–277 (YL), and Tyr325. Residue Cys413 is part of the active site. Position 495 (Gly495) interacts with NAD(+).

Belongs to the urocanase family. Requires NAD(+) as cofactor.

The protein localises to the cytoplasm. The catalysed reaction is 4-imidazolone-5-propanoate = trans-urocanate + H2O. It functions in the pathway amino-acid degradation; L-histidine degradation into L-glutamate; N-formimidoyl-L-glutamate from L-histidine: step 2/3. Functionally, catalyzes the conversion of urocanate to 4-imidazolone-5-propionate. In Vibrio vulnificus (strain YJ016), this protein is Urocanate hydratase.